We begin with the raw amino-acid sequence, 68 residues long: Head completion protein (68 aa).

Belongs to the lambda phage gpW family. In terms of assembly, monomer in solution, assembles into hexamers on the prohead. May bind FII and portal protein (Potential).

It localises to the virion. Its function is as follows. Plays a role in morphogenesis of the virion head after genome packaging. Presumably interacts with the portal vertex to stabilize the packaged DNA within the head after packaging. Probably binds to the head-tail connector protein FII. The chain is Head completion protein (W) from Escherichia coli (Bacteriophage lambda).